The chain runs to 77 residues: MSEYMKNEILEFLNRHNGGKTAEIAEALAVTDYQARYYLLLLEKAGMVQRSPLRRGMATYWFLKGEKQAGQSCSSTT.

In Escherichia coli, this protein is P fimbrial regulatory protein KS71A (KS71A).